Consider the following 464-residue polypeptide: Glutamate--tRNA ligase (464 aa).

Positions 10–20 (PSPTGHLHLGG) match the 'HIGH' region motif. Zn(2+) is bound by residues cysteine 99, cysteine 101, cysteine 126, and glutamate 128. A 'KMSKS' region motif is present at residues 236–240 (KLSKR). Lysine 239 serves as a coordination point for ATP.

The protein belongs to the class-I aminoacyl-tRNA synthetase family. Glutamate--tRNA ligase type 1 subfamily. As to quaternary structure, monomer. Zn(2+) serves as cofactor.

It localises to the cytoplasm. It catalyses the reaction tRNA(Glu) + L-glutamate + ATP = L-glutamyl-tRNA(Glu) + AMP + diphosphate. Catalyzes the attachment of glutamate to tRNA(Glu) in a two-step reaction: glutamate is first activated by ATP to form Glu-AMP and then transferred to the acceptor end of tRNA(Glu). This chain is Glutamate--tRNA ligase, found in Oleidesulfovibrio alaskensis (strain ATCC BAA-1058 / DSM 17464 / G20) (Desulfovibrio alaskensis).